We begin with the raw amino-acid sequence, 228 residues long: 2,3-bisphosphoglycerate-dependent phosphoglycerate mutase (228 aa).

Residues 8–15 (RHGQSVWN), 21–22 (TG), R60, 87–90 (ERHY), K98, 114–115 (RR), and 183–184 (GN) each bind substrate. H9 serves as the catalytic Tele-phosphohistidine intermediate. The Proton donor/acceptor role is filled by E87.

This sequence belongs to the phosphoglycerate mutase family. BPG-dependent PGAM subfamily.

The catalysed reaction is (2R)-2-phosphoglycerate = (2R)-3-phosphoglycerate. It functions in the pathway carbohydrate degradation; glycolysis; pyruvate from D-glyceraldehyde 3-phosphate: step 3/5. Functionally, catalyzes the interconversion of 2-phosphoglycerate and 3-phosphoglycerate. In Staphylococcus saprophyticus subsp. saprophyticus (strain ATCC 15305 / DSM 20229 / NCIMB 8711 / NCTC 7292 / S-41), this protein is 2,3-bisphosphoglycerate-dependent phosphoglycerate mutase.